Consider the following 122-residue polypeptide: Basic phospholipase A2 Cdr-12 (122 aa).

Cystine bridges form between cysteine 26–cysteine 115, cysteine 28–cysteine 44, cysteine 43–cysteine 95, cysteine 49–cysteine 122, cysteine 50–cysteine 88, cysteine 57–cysteine 81, and cysteine 75–cysteine 86. Ca(2+) is bound by residues tyrosine 27, glycine 29, and glycine 31. Residue histidine 47 is part of the active site. Aspartate 48 is a Ca(2+) binding site. Aspartate 89 is an active-site residue.

Ca(2+) is required as a cofactor. In terms of tissue distribution, expressed by the venom gland.

It localises to the secreted. It carries out the reaction a 1,2-diacyl-sn-glycero-3-phosphocholine + H2O = a 1-acyl-sn-glycero-3-phosphocholine + a fatty acid + H(+). Its function is as follows. Snake venom phospholipase A2 (PLA2) that induces myonecrosis and edema upon intramuscular injections in mice. In vitro, causes a potent blockade of neuromuscular transmission in young chicken biventer cervicis preparation and produces cytotoxicity in murine C2C12 skeletal muscle myotubes and lack cytolytic activity upon myoblasts in vitro. PLA2 catalyzes the calcium-dependent hydrolysis of the 2-acyl groups in 3-sn-phosphoglycerides. The chain is Basic phospholipase A2 Cdr-12 from Crotalus durissus ruruima (South American rattlesnake).